A 90-amino-acid chain; its full sequence is Barrier-to-autointegration factor (90 aa).

It belongs to the BAF family. As to quaternary structure, may interact with MAD1.

The protein resides in the nucleus. It is found in the cytoplasm. The protein localises to the chromosome. In terms of biological role, plays fundamental roles in nuclear assembly, chromatin organization, gene expression and gonad development. May potently compress chromatin structure and be involved in membrane recruitment and chromatin decondensation during nuclear assembly. Functions are required in both M phase and interphase of the cell cycle. The sequence is that of Barrier-to-autointegration factor (baf) from Drosophila melanogaster (Fruit fly).